A 228-amino-acid chain; its full sequence is Putative N-acetylmannosamine-6-phosphate 2-epimerase (228 aa).

The protein belongs to the NanE family.

The enzyme catalyses an N-acyl-D-glucosamine 6-phosphate = an N-acyl-D-mannosamine 6-phosphate. It functions in the pathway amino-sugar metabolism; N-acetylneuraminate degradation; D-fructose 6-phosphate from N-acetylneuraminate: step 3/5. Functionally, converts N-acetylmannosamine-6-phosphate (ManNAc-6-P) to N-acetylglucosamine-6-phosphate (GlcNAc-6-P). The protein is Putative N-acetylmannosamine-6-phosphate 2-epimerase of Pasteurella multocida (strain Pm70).